Here is a 307-residue protein sequence, read N- to C-terminus: Reaction center protein M chain (307 aa).

The next 3 helical transmembrane spans lie at 52-78, 110-139, and 142-167; these read LGIA…WYQA, QGGV…ADQL, and GKHM…PILM. The (7R,8Z)-bacteriochlorophyll b site is built by histidine 181 and histidine 201. Residues 197–225 traverse the membrane as a helical segment; sequence YNPFHGLSIAALYGSALLFAMHGATILAV. Residues histidine 218 and glutamate 233 each coordinate Fe cation. A ubiquinone is bound at residue tryptophan 251. Residues 259–285 traverse the membrane as a helical segment; it reads ATMEGIHRWAIWMAVMVTLTGGIGILL. Histidine 265 is a Fe cation binding site.

This sequence belongs to the reaction center PufL/M/PsbA/D family. In terms of assembly, reaction center is composed of four bacteriochlorophylls, two bacteriopheophytins, two ubiquinones, one iron, and three highly hydrophobic polypeptide chains (designated L, M, and H).

The protein localises to the cellular chromatophore membrane. Functionally, the reaction center is a membrane-bound complex that mediates the initial photochemical event in the electron transfer process of photosynthesis. The sequence is that of Reaction center protein M chain (pufM) from Rhodobacter capsulatus (Rhodopseudomonas capsulata).